A 220-amino-acid polypeptide reads, in one-letter code: Ribose-5-phosphate isomerase A (220 aa).

Residues 28-31 (TGST), 81-84 (DGAD), and 94-97 (KGGG) each bind substrate. E103 functions as the Proton acceptor in the catalytic mechanism. Substrate is bound at residue K121.

Belongs to the ribose 5-phosphate isomerase family. As to quaternary structure, homodimer.

The catalysed reaction is aldehydo-D-ribose 5-phosphate = D-ribulose 5-phosphate. It functions in the pathway carbohydrate degradation; pentose phosphate pathway; D-ribose 5-phosphate from D-ribulose 5-phosphate (non-oxidative stage): step 1/1. Its function is as follows. Catalyzes the reversible conversion of ribose-5-phosphate to ribulose 5-phosphate. The chain is Ribose-5-phosphate isomerase A from Shewanella sp. (strain W3-18-1).